A 712-amino-acid chain; its full sequence is TGF-beta-activated kinase 1 and MAP3K7-binding protein 3 (712 aa).

The residue at position 2 (Ala2) is an N-acetylalanine. Residues 8–51 (LDIQVLHDLRQRFPEIPEGVVSQCMLQNNNNLEACCRALSQESS) form the CUE domain. A phosphoserine mark is found at Ser60, Ser101, and Ser103. Disordered regions lie at residues 141 to 189 (FMNE…HIPR), 227 to 345 (PGSI…KQGS), 369 to 447 (TVEP…SPRV), and 475 to 509 (ERSA…SSGS). Positions 163 to 173 (MQTGMNPSAMQ) are enriched in polar residues. Composition is skewed to low complexity over residues 233-249 (RQTS…QSTP) and 269-290 (YPHQ…IPQS). Residues 322 to 332 (PPSPSTTPPHP) show a composition bias toward pro residues. Polar residues-rich tracts occupy residues 336–345 (GPPSYQKQGS) and 371–404 (EPSQ…TATT). Ser385 is modified (phosphoserine). Thr404 carries the phosphothreonine modification. The segment covering 405-417 (PPSSSPSRGISSQ) has biased composition (low complexity). A phosphoserine mark is found at Ser409 and Ser492. At Ser506 the chain carries Phosphoserine; by MAPKAPK2 and MAPKAPK3. A coiled-coil region spans residues 517–559 (ALLLHQRARMERLAKQLKLEKEELERLKSEVNGMEHDLMQRRL). Residues 609–636 (MNNFYDNIEPGPVVPPKPSKKDSSDPCT) form a disordered region. A compositionally biased stretch (basic and acidic residues) spans 627-636 (SKKDSSDPCT). Lys649 is covalently cross-linked (Glycyl lysine isopeptide (Lys-Gly) (interchain with G-Cter in ubiquitin)). Basic and acidic residues predominate over residues 658–667 (QAAAADEHRT). A disordered region spans residues 658-682 (QAAAADEHRTGSTQSPRTQPRDEDY). The segment at 682–712 (YEGAPWNCDSCTFLNHPALNRCEQCEMPRYT) adopts a RanBP2-type zinc-finger fold. Cys692 bears the (Microbial infection) S-methylcysteine mark.

In terms of assembly, interacts with TAB1, TAB2, MAP3K7, TRAF2 and TRAF6. The minimal TAB3-containing complex (TAB1-MAP3K7-TAB3) appears not to contain TAB2. However, it seems sensible to consider that TAB2 may also join this complex and may act in a cooperative manner with TAB3. Interacts with DYNC2I2 (via the WD domains). Interacts with RBCK1. Binds 'Lys-63'-linked polyubiquitin chains. Interacts with TRIM5. Interacts with TRIM38 (via B30.2/SPRY domain), leading to its translocation to lysosomes and degradation. Interacts with ASB1. As to quaternary structure, (Microbial infection) Interacts with M.tuberculosis PtpA, which blocks the NF-kappa-B signaling pathway. Ubiquitinated; following IL1 stimulation or TRAF6 overexpression. Ubiquitinated by AMFR via 'Lys-27'-linked polyubiquitination; leading to TAK1/MAP3K7 activation. Post-translationally, degraded in a lysosome-dependent manner following interaction with TRIM38. In terms of processing, phosphorylated at Ser-506 by MAPKAPK2 and MAPKAPK3 following IL1 treatment. (Microbial infection) Methylated at Cys-692 by enteropathogenic E.coli protein NleE or S.flexneri protein OspZ: methylation disrupts zinc-binding and ability to bind 'Lys-63'-linked ubiquitin, leading to NF-kappa-B inactivation. Widely expressed. Constitutively overexpressed in certain tumor tissues. In terms of tissue distribution, major transcript. As to expression, minor transcript.

Functionally, adapter required to activate the JNK and NF-kappa-B signaling pathways through the specific recognition of 'Lys-63'-linked polyubiquitin chains by its RanBP2-type zinc finger (NZF). Acts as an adapter linking MAP3K7/TAK1 and TRAF6 to 'Lys-63'-linked polyubiquitin chains. The RanBP2-type zinc finger (NZF) specifically recognizes Lys-63'-linked polyubiquitin chains unanchored or anchored to the substrate proteins such as RIPK1/RIP1 and RIPK2: this acts as a scaffold to organize a large signaling complex to promote autophosphorylation of MAP3K7/TAK1, and subsequent activation of I-kappa-B-kinase (IKK) core complex by MAP3K7/TAK1. In terms of biological role, may be an oncogenic factor. This chain is TGF-beta-activated kinase 1 and MAP3K7-binding protein 3, found in Homo sapiens (Human).